The following is a 502-amino-acid chain: Dynein regulatory complex subunit 2 (502 aa).

Coiled coils occupy residues 96–160 (DSVI…RKAI) and 252–285 (EKSS…HSRE).

The protein belongs to the DRC2 family. In terms of assembly, component of the nexin-dynein regulatory complex (N-DRC). Interacts with DRC1.

The protein resides in the cytoplasm. It localises to the cytoskeleton. The protein localises to the flagellum basal body. Its subcellular location is the cell projection. It is found in the cilium. The protein resides in the flagellum. It localises to the flagellum axoneme. Component of the nexin-dynein regulatory complex (N-DRC), a key regulator of ciliary/flagellar motility which maintains the alignment and integrity of the distal axoneme and regulates microtubule sliding in motile axonemes. Plays a critical role in the assembly of N-DRC and also stabilizes the assembly of multiple inner dynein arms and radial spokes. Coassembles with DRC1 to form a central scaffold needed for assembly of the N-DRC and its attachment to the outer doublet microtubules. This Rattus norvegicus (Rat) protein is Dynein regulatory complex subunit 2 (Ccdc65).